Here is a 288-residue protein sequence, read N- to C-terminus: ATP synthase gamma chain (288 aa).

Belongs to the ATPase gamma chain family. As to quaternary structure, F-type ATPases have 2 components, CF(1) - the catalytic core - and CF(0) - the membrane proton channel. CF(1) has five subunits: alpha(3), beta(3), gamma(1), delta(1), epsilon(1). CF(0) has three main subunits: a, b and c.

It localises to the cell inner membrane. In terms of biological role, produces ATP from ADP in the presence of a proton gradient across the membrane. The gamma chain is believed to be important in regulating ATPase activity and the flow of protons through the CF(0) complex. The chain is ATP synthase gamma chain from Trichlorobacter lovleyi (strain ATCC BAA-1151 / DSM 17278 / SZ) (Geobacter lovleyi).